The chain runs to 481 residues: Calcium uptake protein 1, mitochondrial (481 aa).

A mitochondrion-targeting transit peptide spans 1–33 (MFRLHSLSALAELAVGSRCYHGGSQPTQMKRRL). Residues 58 to 82 (ESPPSVNNPKSELGDKGKNKDEGEV) are disordered. Residues 69-82 (ELGDKGKNKDEGEV) are compositionally biased toward basic and acidic residues. The segment at 101–112 (KKKKRSGFRDRK) is polybasic region. Ser124 carries the post-translational modification Phosphoserine. Residues 128–131 (KIFR) form a k/R-ring region. Residues 220–255 (TPQRNFEIAFKMFDLNGDGEVDMEEFEQASCPGNII) enclose the EF-hand 1 domain. Residues Asp233, Asn235, Asp237, Glu239, and Glu244 each contribute to the Ca(2+) site. A k/R-ring region spans residues 264 to 268 (RHRDR). The region spanning 413-448 (LSDHVCDVVFALFDCDGNGELSNKEFVSIMKQRLMR) is the EF-hand 2 domain. Asp426, Asp428, Asn430, Glu432, and Glu437 together coordinate Ca(2+). Arg460 is modified (asymmetric dimethylarginine). The C-helix region stretch occupies residues 460-470 (RLMQAMWKCAQ).

It belongs to the MICU1 family. MICU1 subfamily. In terms of assembly, heterodimer; disulfide-linked; heterodimerizes with MICU2 or MICU3. Homodimer; disulfide-linked. Component of the uniplex complex, composed of MCU, EMRE/SMDT1, MICU1 and MICU2 (or MICU3) in a 4:4:1:1 stoichiometry. The composition of calcium sensors within the uniplex complex can differ depending on tissues: a MICU1 homodimer can be present instead of the MICU1-MICU2 heterodimer in skeletal-muscle and kidney. MICU1 is recruited to the uniplex complex by EMRE/SMDT1, and it associates with MCU at low calcium levels, occluding the pore of the MCU channel. Associates with the MICOS complex. Interacts with SLC25A23. Interacts with CHCHD4/MIA40; which introduces the interchain disulfide bond with MICU2. Interacts (when methylated) with UCP2; leading to decrease the calcium sensitivity of MICU1. In terms of processing, phosphorylation at Ser-124 by AKT1 impairs its maturation and stability. Asymmetric dimethylation at Arg-460 by PRMT1 decreases the calcium sensitivity of MICU1 by promoting interaction with UCP2. Post-translationally, degraded by YME1L1 when not complexed as homodimer or heterodimer. Not degraded when complexed as homodimer or heterodimer; the presence of the interchain disulfide bond protecting MICU1 from degradation by YME1L1.

It is found in the mitochondrion intermembrane space. The protein localises to the mitochondrion inner membrane. In terms of biological role, calcium sensor of the mitochondrial calcium uniporter (MCU) channel, which senses calcium level via its EF-hand domains. MICU1 and MICU2 (or MICU3) form a disulfide-linked heterodimer that stimulates and inhibits MCU activity, depending on the concentration of calcium. At low calcium levels, MICU1 occludes the pore of the MCU channel, preventing mitochondrial calcium uptake. At higher calcium levels, calcium-binding to MICU1 and MICU2 (or MICU3) induces a conformational change that weakens MCU-MICU1 interactions and moves the MICU1-MICU2 heterodimer away from the pore, allowing calcium permeation through the MCU channel. Also required to protect against manganese toxicity by preventing manganese uptake by MCU: mechanistically, manganese-binding to its EF-hand domains does not induce any conformational change, maintaining MCU pore occlusion. Acts as a regulator of mitochondrial cristae structure independently of its ability to regulate the mitochondrial calcium uniporter channel. Regulates glucose-dependent insulin secretion in pancreatic beta-cells by regulating mitochondrial calcium uptake. Induces T-helper 1-mediated autoreactivity, which is accompanied by the release of IFNG. The polypeptide is Calcium uptake protein 1, mitochondrial (MICU1) (Ailuropoda melanoleuca (Giant panda)).